Consider the following 802-residue polypeptide: MAHRCLLLWSRGGCRRGLPPLLVPRGCLGPDRRPCLRTLYQYATVQTASSRRSLLRDVIAAYQRFCSRPPKGFEKYFPNGKNGKKASEPKEAVGEKKEPQPSGPQPSGGAGGGGGKRRGKKEDSHWWSRFQKGDFPWDDKDFRMYFLWTALFWGGVMIYFVFKSSGREITWKDFVNNYLSKGVVDRLEVVNKRFVRVTFTPGKTPVDGQYVWFNIGSVDTFERNLETLQQELGIEGENRVPVVYIAESDGSFLLSMLPTVLIIAFLLYTIRRGPAGIGRTGRGMGGLFSVGETTAKVLKDEIDVKFKDVAGCEEAKLEIMEFVNFLKNPKQYQDLGAKIPKGAILTGPPGTGKTLLAKATAGEANVPFITVSGSEFLEMFVGVGPARVRDLFALARKNAPCILFIDEIDAVGRKRGRGNFGGQSEQENTLNQLLVEMDGFNTTTNVVILAGTNRPDILDPALLRPGRFDRQIFIGPPDIKGRASIFKVHLRPLKLDSALEKDKLARKLASLTPGFSGADVANVCNEAALIAARHLSDAINEKHFEQAIERVIGGLEKKTQVLQPEEKKTVAYHEAGHAVAGWYLEHADPLLKVSIIPRGKGLGYAQYLPKEQYLYTKEQLLDRMCMTLGGRVSEEIFFGRITTGAQDDLRKVTQSAYAQIVQFGMNEKVGQISFDLPRQGDMVLEKPYSEATARMIDDEVRILISDAYRRTVALLTEKKADVEKVALLLLEKEVLDKNDMVQLLGPRPFTEKSTYEEFVEGTGSLDEDTSLPEGLQDWNKEREKEEKKEKEKEEPLNEKVVS.

Residues 1 to 38 constitute a mitochondrion transit peptide; sequence MAHRCLLLWSRGGCRRGLPPLLVPRGCLGPDRRPCLRT. A propeptide spans 39–66 (removed in mature form); sequence LYQYATVQTASSRRSLLRDVIAAYQRFC. Positions 76-124 are disordered; it reads YFPNGKNGKKASEPKEAVGEKKEPQPSGPQPSGGAGGGGGKRRGKKEDS. A compositionally biased stretch (basic and acidic residues) spans 85–99; that stretch reads KASEPKEAVGEKKEP. The residue at position 116 (Lys116) is an N6-succinyllysine. 2 helical membrane passes run 142–162 and 250–270; these read FRMY…YFVF and GSFL…LYTI. Positions 309, 310, 351, 352, 353, 354, 355, and 489 each coordinate ATP. His573 serves as a coordination point for Zn(2+). Residue Glu574 is part of the active site. Zn(2+) contacts are provided by His577 and Asp648. Positions 759–802 are disordered; it reads VEGTGSLDEDTSLPEGLQDWNKEREKEEKKEKEKEEPLNEKVVS. The segment covering 778–802 has biased composition (basic and acidic residues); that stretch reads WNKEREKEEKKEKEKEEPLNEKVVS.

It in the N-terminal section; belongs to the AAA ATPase family. This sequence in the C-terminal section; belongs to the peptidase M41 family. In terms of assembly, homohexamer. Forms heterohexamers with SPG7 and AFG3L1. The m-AAA protease is either composed of homohexamers of AFG3L2 or heterohexamers of AFG3L1, AFG3L2 and/or SPG7. Interacts with MAIP1. Interacts with DNAJC19. Interacts with PHB2. The cofactor is Zn(2+). Post-translationally, upon import into the mitochondrion, the N-terminal transit peptide is cleaved to generate an intermediate form which undergoes autocatalytic proteolytic processing to generate the proteolytically active mature form. Highly expressed in the cerebellar Purkinje cells.

Its subcellular location is the mitochondrion inner membrane. The catalysed reaction is ATP + H2O = ADP + phosphate + H(+). Its function is as follows. Catalytic component of the m-AAA protease, a protease that plays a key role in proteostasis of inner mitochondrial membrane proteins, and which is essential for axonal and neuron development. AFG3L2 possesses both ATPase and protease activities: the ATPase activity is required to unfold substrates, threading them into the internal proteolytic cavity for hydrolysis into small peptide fragments. The m-AAA protease carries out protein quality control in the inner membrane of the mitochondria by mediating degradation of mistranslated or misfolded polypeptides. The m-AAA protease complex also promotes the processing and maturation of mitochondrial proteins, such as MRPL32/bL32m, PINK1 and SP7. Mediates protein maturation of the mitochondrial ribosomal subunit MRPL32/bL32m by catalyzing the cleavage of the presequence of MRPL32/bL32m prior to assembly into the mitochondrial ribosome. Required for SPG7 maturation into its active mature form after SPG7 cleavage by mitochondrial-processing peptidase (MPP). Required for the maturation of PINK1 into its 52kDa mature form after its cleavage by mitochondrial-processing peptidase (MPP). Acts as a regulator of calcium in neurons by mediating degradation of SMDT1/EMRE before its assembly with the uniporter complex, limiting the availability of SMDT1/EMRE for MCU assembly and promoting efficient assembly of gatekeeper subunits with MCU. Promotes the proteolytic degradation of GHITM upon hyperpolarization of mitochondria: progressive GHITM degradation leads to respiratory complex I degradation and broad reshaping of the mitochondrial proteome by AFG3L2. Also acts as a regulator of mitochondrial glutathione homeostasis by mediating cleavage and degradation of SLC25A39. SLC25A39 cleavage is prevented when SLC25A39 binds iron-sulfur. Involved in the regulation of OMA1-dependent processing of OPA1. May act by mediating processing of OMA1 precursor, participating in OMA1 maturation. The protein is Mitochondrial inner membrane m-AAA protease component AFG3L2 of Mus musculus (Mouse).